Consider the following 444-residue polypeptide: UDP-N-acetylglucosamine 1-carboxyvinyltransferase (444 aa).

22–23 (KN) serves as a coordination point for phosphoenolpyruvate. Arg-94 is a UDP-N-acetyl-alpha-D-glucosamine binding site. Asp-119 (proton donor) is an active-site residue. Residues Asp-309 and Val-331 each contribute to the UDP-N-acetyl-alpha-D-glucosamine site.

It belongs to the EPSP synthase family. MurA subfamily.

Its subcellular location is the cytoplasm. The enzyme catalyses phosphoenolpyruvate + UDP-N-acetyl-alpha-D-glucosamine = UDP-N-acetyl-3-O-(1-carboxyvinyl)-alpha-D-glucosamine + phosphate. Its pathway is cell wall biogenesis; peptidoglycan biosynthesis. Cell wall formation. Adds enolpyruvyl to UDP-N-acetylglucosamine. In Chlamydia trachomatis serovar A (strain ATCC VR-571B / DSM 19440 / HAR-13), this protein is UDP-N-acetylglucosamine 1-carboxyvinyltransferase.